Here is a 44-residue protein sequence, read N- to C-terminus: Protein PsbN (44 aa).

Residues F6–V26 form a helical membrane-spanning segment.

Belongs to the PsbN family.

The protein localises to the plastid. The protein resides in the chloroplast thylakoid membrane. May play a role in photosystem I and II biogenesis. The chain is Protein PsbN from Bigelowiella natans (Pedinomonas minutissima).